We begin with the raw amino-acid sequence, 594 residues long: Aspartate--tRNA(Asp/Asn) ligase (594 aa).

Glutamate 175 serves as a coordination point for L-aspartate. The interval 199–202 (QQFK) is aspartate. Residues arginine 221 and histidine 455 each contribute to the L-aspartate site. 221–223 (RDE) provides a ligand contact to ATP. Glutamate 489 serves as a coordination point for ATP. Residue arginine 496 coordinates L-aspartate. 541-544 (GIDR) is a binding site for ATP.

This sequence belongs to the class-II aminoacyl-tRNA synthetase family. Type 1 subfamily. Homodimer.

It is found in the cytoplasm. It carries out the reaction tRNA(Asx) + L-aspartate + ATP = L-aspartyl-tRNA(Asx) + AMP + diphosphate. Its function is as follows. Aspartyl-tRNA synthetase with relaxed tRNA specificity since it is able to aspartylate not only its cognate tRNA(Asp) but also tRNA(Asn). Reaction proceeds in two steps: L-aspartate is first activated by ATP to form Asp-AMP and then transferred to the acceptor end of tRNA(Asp/Asn). This is Aspartate--tRNA(Asp/Asn) ligase from Pelagibacter ubique (strain HTCC1062).